A 408-amino-acid polypeptide reads, in one-letter code: GTPase HflX (408 aa).

The region spanning 198–361 is the Hflx-type G domain; that stretch reads PRVSLVGYTN…LIVREMERHY (164 aa). GTP contacts are provided by residues 204 to 211, 229 to 233, 251 to 254, 317 to 320, and 339 to 341; these read GYTNAGKS, FVTLD, DTVG, NKAD, and SAK. Residues Ser-211 and Thr-231 each contribute to the Mg(2+) site.

This sequence belongs to the TRAFAC class OBG-HflX-like GTPase superfamily. HflX GTPase family. As to quaternary structure, monomer. Associates with the 50S ribosomal subunit. It depends on Mg(2+) as a cofactor.

The protein localises to the cytoplasm. Functionally, GTPase that associates with the 50S ribosomal subunit and may have a role during protein synthesis or ribosome biogenesis. This is GTPase HflX from Spirochaeta thermophila (strain ATCC 49972 / DSM 6192 / RI 19.B1).